A 722-amino-acid chain; its full sequence is MEKNGNNRKLRVCVATCNRADYSKLAPIMFGIKTEPAFFELDVVVLGSHLIDDYGNTYRMIEQDDFDINTRLHTIVRGEDEAAMVESVGLALVKLPDVLNRLKPDIMIVHGDRFDALALATSAALMNIRILHIEGGEVSGTIDDSIRHAITKLAHYHVCCTRSAEQHLISMCEDHDRILLAGCPSYDKLLSAKNKDYMSIIRMWLGDDVKCKDYIVALQHPVTTDIKHSIKMFELTLDALISFNKRTLVLFPNIDAGSKEMVRVMRKKGIEHHPNFRAVKHVPFDQFIQLVAHAGCMIGNSSCGVREVGAFGTPVINLGTRQIGRETGENVLHVRDADTQDKILQALHLQFGKQYPCSKIYGDGNAVPRILKFLKSIDLQEPLQKKFCFPPVKENISQDIDHILETLSALAVDLGGTNLRVAIVSMKGEIVKKYTQFNPKTYEERISLILQMCVEAAAEAVKLNCRILGVGISTGGRVNPQEGVVLHSTKLIQEWNSVDLRTPLSDTLHLPVWVDNDGNCAAMAERKFGQGKGQENFVTLITGTGIGGGIIHQHELIHGSSFCAAELGHLVVSLDGPDCSCGSHGCIEAYASGMALQREAKKLHDEDLLLVEGMSVPKDEAVGALHLIQAAKLGNVKAQSILRTAGTALGLGVVNILHTMNPSLVILSGVLASHYIHIVRDVIRQQALSSVQDVDVVVSDLVDPALLGAASMVLDYTTRRIH.

Residues R19, S23, R113, H220, and N253 each contribute to the UDP site. Positions 259, 271, 280, and 281 each coordinate CMP-N-acetyl-beta-neuraminate. UDP-binding residues include V282, S301, S302, E307, and R321. The N-acetylmannosamine kinase stretch occupies residues 406–722 (TLSALAVDLG…VLDYTTRRIH (317 aa)). Mg(2+) is bound at residue D413. G416 contributes to the an N-acyl-D-mannosamine 6-phosphate binding site. Residues T417, N418, and R420 each contribute to the ADP site. The an N-acyl-D-mannosamine 6-phosphate site is built by G476, R477, T489, N516, D517, and G545. Residues G476, R477, T489, N516, and D517 each contribute to the an N-acyl-D-mannosamine site. Residue D517 is part of the active site. 2 residues coordinate an N-acyl-D-mannosamine: E566 and H569. H569 contributes to the an N-acyl-D-mannosamine 6-phosphate binding site. 4 residues coordinate Zn(2+): H569, C579, C581, and C586. E588 is an an N-acyl-D-mannosamine 6-phosphate binding site. E588 serves as a coordination point for an N-acyl-D-mannosamine.

This sequence in the N-terminal section; belongs to the UDP-N-acetylglucosamine 2-epimerase family. The protein in the C-terminal section; belongs to the ROK (NagC/XylR) family. In terms of assembly, homodimer. Homotetramer. Homohexamer. The hexameric form exhibits both enzyme activities, whereas the dimeric form only catalyzes the phosphorylation of N-acyl-D-mannosamine. Phosphorylated. Phosphorylation by PKC activates the UDP-N-acetylglucosamine 2-epimerase activity. As to expression, widely expressed. Highest expression is observed in liver.

Its subcellular location is the cytoplasm. The protein resides in the cytosol. The catalysed reaction is UDP-N-acetyl-alpha-D-glucosamine + H2O = aldehydo-N-acetyl-D-mannosamine + UDP + H(+). It catalyses the reaction an N-acyl-D-mannosamine + ATP = an N-acyl-D-mannosamine 6-phosphate + ADP + H(+). It participates in amino-sugar metabolism; N-acetylneuraminate biosynthesis. With respect to regulation, the UDP-N-acetylglucosamine 2-epimerase activity, in contrast to the N-acetylmannosamine kinase activity, exhibits allosteric regulation by cytidine monophosphate-N-acetylneuraminic acid (CMP-Neu5Ac), the end product of neuraminic acid biosynthesis. Moreover, the activity is contingent upon the oligomeric state of the enzyme. The monomeric form is inactive, while the dimeric form selectively catalyzes the phosphorylation of N-acetylmannosamine. The hexameric form, on the other hand, demonstrates full proficiency in both enzyme activities. Furthermore, the UDP-N-acetylglucosamine 2-epimerase activity is increased by PKC-mediated phosphorylation. In terms of biological role, bifunctional enzyme that possesses both UDP-N-acetylglucosamine 2-epimerase and N-acetylmannosamine kinase activities, and serves as the initiator of the biosynthetic pathway leading to the production of N-acetylneuraminic acid (NeuAc), a critical precursor in the synthesis of sialic acids. By catalyzing this pivotal and rate-limiting step in sialic acid biosynthesis, this enzyme assumes a pivotal role in governing the regulation of cell surface sialylation. Sialic acids represent a category of negatively charged sugars that reside on the surface of cells as terminal components of glycoconjugates and mediate important functions in various cellular processes, including cell adhesion, signal transduction, and cellular recognition. This is Bifunctional UDP-N-acetylglucosamine 2-epimerase/N-acetylmannosamine kinase from Rattus norvegicus (Rat).